The sequence spans 417 residues: Serine hydroxymethyltransferase 1 (417 aa).

(6S)-5,6,7,8-tetrahydrofolate is bound by residues L121 and 125-127 (GHL). K229 is modified (N6-(pyridoxal phosphate)lysine). 354-356 (SPF) is a (6S)-5,6,7,8-tetrahydrofolate binding site.

It belongs to the SHMT family. As to quaternary structure, homodimer. It depends on pyridoxal 5'-phosphate as a cofactor.

The protein localises to the cytoplasm. The enzyme catalyses (6R)-5,10-methylene-5,6,7,8-tetrahydrofolate + glycine + H2O = (6S)-5,6,7,8-tetrahydrofolate + L-serine. It functions in the pathway one-carbon metabolism; tetrahydrofolate interconversion. Its pathway is amino-acid biosynthesis; glycine biosynthesis; glycine from L-serine: step 1/1. Its function is as follows. Catalyzes the reversible interconversion of serine and glycine with tetrahydrofolate (THF) serving as the one-carbon carrier. This reaction serves as the major source of one-carbon groups required for the biosynthesis of purines, thymidylate, methionine, and other important biomolecules. Also exhibits THF-independent aldolase activity toward beta-hydroxyamino acids, producing glycine and aldehydes, via a retro-aldol mechanism. This chain is Serine hydroxymethyltransferase 1, found in Pseudomonas syringae pv. syringae (strain B728a).